Reading from the N-terminus, the 196-residue chain is Fe/S biogenesis protein NfuA (196 aa).

The [4Fe-4S] cluster site is built by Cys154 and Cys157.

Belongs to the NfuA family. As to quaternary structure, homodimer. [4Fe-4S] cluster serves as cofactor.

In terms of biological role, involved in iron-sulfur cluster biogenesis. Binds a 4Fe-4S cluster, can transfer this cluster to apoproteins, and thereby intervenes in the maturation of Fe/S proteins. Could also act as a scaffold/chaperone for damaged Fe/S proteins. The protein is Fe/S biogenesis protein NfuA of Blochmanniella pennsylvanica (strain BPEN).